A 317-amino-acid chain; its full sequence is Ribonuclease H2 subunit A (317 aa).

The RNase H type-2 domain maps to 43-270 (PCCLGVDEAG…AKDMLETKGG (228 aa)). A divalent metal cation is bound by residues Asp-49, Glu-50, and Asp-166.

This sequence belongs to the RNase HII family. Eukaryotic subfamily. The cofactor is Mn(2+). It depends on Mg(2+) as a cofactor.

The catalysed reaction is Endonucleolytic cleavage to 5'-phosphomonoester.. Functionally, endonuclease that specifically degrades the RNA of RNA-DNA hybrids. Participates in DNA replication. The polypeptide is Ribonuclease H2 subunit A (rnh-201) (Neurospora crassa (strain ATCC 24698 / 74-OR23-1A / CBS 708.71 / DSM 1257 / FGSC 987)).